Consider the following 112-residue polypeptide: Putative pterin-4-alpha-carbinolamine dehydratase (112 aa).

The protein belongs to the pterin-4-alpha-carbinolamine dehydratase family.

It catalyses the reaction (4aS,6R)-4a-hydroxy-L-erythro-5,6,7,8-tetrahydrobiopterin = (6R)-L-erythro-6,7-dihydrobiopterin + H2O. The chain is Putative pterin-4-alpha-carbinolamine dehydratase from Shewanella putrefaciens (strain CN-32 / ATCC BAA-453).